The following is a 455-amino-acid chain: 2-oxoisovalerate dehydrogenase subunit alpha, mitochondrial (455 aa).

Residues 1–55 (MQGSAKMAMAVAVAVARVWRPSRGLGRTGLPLLRLLGARGLARFHPHRWQQQQHF) constitute a mitochondrion transit peptide. Thiamine diphosphate is bound by residues Tyr168 and Arg169. A K(+)-binding site is contributed by Ser216. Ser217 provides a ligand contact to thiamine diphosphate. The K(+) site is built by Pro218, Thr221, and Gln222. Position 248 (Glu248) interacts with Mg(2+). Residues Gly249, Ala250, and Arg275 each coordinate thiamine diphosphate. Positions 277 and 279 each coordinate Mg(2+). His346 lines the thiamine diphosphate pocket. Residue Ser347 is modified to Phosphoserine; by BCKDK. Thr348 bears the Phosphothreonine mark. Residues Ser349 and Ser357 each carry the phosphoserine modification. Lys366 carries the N6-acetyllysine; alternate modification. Position 366 is an N6-succinyllysine; alternate (Lys366). Lys390 is modified (N6-succinyllysine).

The protein belongs to the BCKDHA family. As to quaternary structure, heterotetramer of 2 alpha/BCKDHA and 2 beta chains/BCKDHB that forms the branched-chain alpha-keto acid decarboxylase (E1) component of the BCKD complex. The branched-chain alpha-ketoacid dehydrogenase is a large complex composed of three major building blocks E1, E2 and E3. It is organized around E2, a 24-meric cubic core composed of DBT, to which are associated 6 to 12 copies of E1, and approximately 6 copies of the dehydrogenase E3, a DLD dimer. Interacts with PPM1K. It depends on thiamine diphosphate as a cofactor. Mg(2+) serves as cofactor. In terms of processing, phosphorylated at Ser-347 by BCKDK and dephosphorylated by protein phosphatase PPM1K. As to expression, expressed in kidney (at protein level).

It localises to the mitochondrion matrix. The enzyme catalyses N(6)-[(R)-lipoyl]-L-lysyl-[protein] + 3-methyl-2-oxobutanoate + H(+) = N(6)-[(R)-S(8)-2-methylpropanoyldihydrolipoyl]-L-lysyl-[protein] + CO2. In terms of biological role, together with BCKDHB forms the heterotetrameric E1 subunit of the mitochondrial branched-chain alpha-ketoacid dehydrogenase (BCKD) complex. The BCKD complex catalyzes the multi-step oxidative decarboxylation of alpha-ketoacids derived from the branched-chain amino-acids valine, leucine and isoleucine producing CO2 and acyl-CoA which is subsequently utilized to produce energy. The E1 subunit catalyzes the first step with the decarboxylation of the alpha-ketoacid forming an enzyme-product intermediate. A reductive acylation mediated by the lipoylamide cofactor of E2 extracts the acyl group from the E1 active site for the next step of the reaction. This Bos taurus (Bovine) protein is 2-oxoisovalerate dehydrogenase subunit alpha, mitochondrial (BCKDHA).